A 1346-amino-acid chain; its full sequence is Cytokinesis protein sepH (1346 aa).

The disordered stretch occupies residues 1–50 (MVSRSNEGPEAPHPASRTPGAPAKGRLTRLGSSPSKRDDKAKDDRMGKTS). Positions 35 to 50 (SKRDDKAKDDRMGKTS) are enriched in basic and acidic residues. A Protein kinase domain is found at 60-310 (YQLGDCLGRG…ARKLLKHPWI (251 aa)). ATP contacts are provided by residues 66–74 (LGRGAFGSV) and Lys89. Asp182 serves as the catalytic Proton acceptor. 3 disordered regions span residues 342 to 380 (RSPE…PSPV), 446 to 497 (DESF…HMRR), and 1211 to 1295 (LCKL…AGAS). Polar residues-rich tracts occupy residues 477–489 (QQAN…SQNG) and 1220–1249 (RGST…NQSK).

The protein belongs to the protein kinase superfamily. Ser/Thr protein kinase family. CDC7 subfamily. Requires Mg(2+) as cofactor.

It carries out the reaction L-seryl-[protein] + ATP = O-phospho-L-seryl-[protein] + ADP + H(+). The enzyme catalyses L-threonyl-[protein] + ATP = O-phospho-L-threonyl-[protein] + ADP + H(+). In terms of biological role, required for early events during cytokinesis including localization of cytoskeletal components to the cytokinetic ring. In Emericella nidulans (strain FGSC A4 / ATCC 38163 / CBS 112.46 / NRRL 194 / M139) (Aspergillus nidulans), this protein is Cytokinesis protein sepH.